The following is a 164-amino-acid chain: NADH-quinone oxidoreductase subunit I (164 aa).

4Fe-4S ferredoxin-type domains lie at 55 to 85 (LRRYPNGEERCIACKLCEAICPAQAITIDAE) and 95 to 124 (TRYDIDMTKCIYCGFCQEACPVDAIVEGPN). Positions 65, 68, 71, 75, 104, 107, 110, and 114 each coordinate [4Fe-4S] cluster.

Belongs to the complex I 23 kDa subunit family. NDH-1 is composed of 14 different subunits. Subunits NuoA, H, J, K, L, M, N constitute the membrane sector of the complex. It depends on [4Fe-4S] cluster as a cofactor.

The protein localises to the cell inner membrane. The enzyme catalyses a quinone + NADH + 5 H(+)(in) = a quinol + NAD(+) + 4 H(+)(out). In terms of biological role, NDH-1 shuttles electrons from NADH, via FMN and iron-sulfur (Fe-S) centers, to quinones in the respiratory chain. The immediate electron acceptor for the enzyme in this species is believed to be ubiquinone. Couples the redox reaction to proton translocation (for every two electrons transferred, four hydrogen ions are translocated across the cytoplasmic membrane), and thus conserves the redox energy in a proton gradient. This is NADH-quinone oxidoreductase subunit I from Jannaschia sp. (strain CCS1).